A 104-amino-acid polypeptide reads, in one-letter code: Thioredoxin (104 aa).

Positions 2–104 (AIVKVTDSDF…NLAEVLDKHL (103 aa)) constitute a Thioredoxin domain. A disulfide bridge links Cys29 with Cys32.

Belongs to the thioredoxin family.

In terms of biological role, component of the thioredoxin-thioredoxin reductase system. Participates in various redox reactions through the reversible oxidation of its active center dithiol to a disulfide and catalyzes dithiol-disulfide exchange reactions. The sequence is that of Thioredoxin (trxA) from Staphylococcus epidermidis (strain ATCC 35984 / DSM 28319 / BCRC 17069 / CCUG 31568 / BM 3577 / RP62A).